An 80-amino-acid chain; its full sequence is Raniseptin-4 (80 aa).

Positions 1–22 are cleaved as a signal peptide; sequence MAFLKKSLFLVLFLGIVSLSIC. Positions 23 to 49 are excised as a propeptide; sequence EEEKREGEEEEKQEEENEELSEEELRD.

It belongs to the frog skin active peptide (FSAP) family. Dermaseptin subfamily. In terms of tissue distribution, expressed by the skin glands.

Its subcellular location is the secreted. Functionally, has antibacterial activity. The sequence is that of Raniseptin-4 from Boana raniceps (Chaco tree frog).